We begin with the raw amino-acid sequence, 61 residues long: Small ribosomal subunit protein uS14 (61 aa).

Cysteine 24, cysteine 27, cysteine 40, and cysteine 43 together coordinate Zn(2+).

This sequence belongs to the universal ribosomal protein uS14 family. Zinc-binding uS14 subfamily. In terms of assembly, part of the 30S ribosomal subunit. Contacts proteins S3 and S10. Zn(2+) serves as cofactor.

Binds 16S rRNA, required for the assembly of 30S particles and may also be responsible for determining the conformation of the 16S rRNA at the A site. The chain is Small ribosomal subunit protein uS14 from Campylobacter curvus (strain 525.92).